The primary structure comprises 547 residues: uncharacterized protein (547 aa).

It to B.pertussis prn N-terminal region.

This is an uncharacterized protein from Escherichia coli O157:H7.